Here is a 480-residue protein sequence, read N- to C-terminus: Trigger factor (480 aa).

Residues 161–249 form the PPIase FKBP-type domain; the sequence is GDRLLITGKF…VVEVLKEQLP (89 aa). A disordered region spans residues 426–480; it reads TEEPVEKEAEEKNEEFAIDHEVLPTKDHDAIPAAKYDDNTPKGAETEDKQEKDKD. The segment covering 429–480 has biased composition (basic and acidic residues); sequence PVEKEAEEKNEEFAIDHEVLPTKDHDAIPAAKYDDNTPKGAETEDKQEKDKD.

The protein belongs to the FKBP-type PPIase family. Tig subfamily.

Its subcellular location is the cytoplasm. The enzyme catalyses [protein]-peptidylproline (omega=180) = [protein]-peptidylproline (omega=0). Functionally, involved in protein export. Acts as a chaperone by maintaining the newly synthesized protein in an open conformation. Functions as a peptidyl-prolyl cis-trans isomerase. In Rhodopirellula baltica (strain DSM 10527 / NCIMB 13988 / SH1), this protein is Trigger factor.